The primary structure comprises 305 residues: uncharacterized protein (305 aa).

Helical transmembrane passes span 52–72 (TINL…SKII), 89–109 (IAGF…FIAA), and 120–140 (VIAI…GSLS).

It belongs to the MscS (TC 1.A.23) family.

It localises to the cell membrane. This is an uncharacterized protein from Buchnera aphidicola subsp. Acyrthosiphon pisum (strain APS) (Acyrthosiphon pisum symbiotic bacterium).